Reading from the N-terminus, the 110-residue chain is Circadian clock oscillator protein KaiB (110 aa).

It belongs to the KaiB family. The KaiABC complex composition changes during the circadian cycle to control KaiC phosphorylation. Complexes KaiC(6), KaiA(2-4):KaiC(6), KaiB(6):KaiC(6) and KaiC(6):KaiB(6):KaiA(12) are among the most important forms, many form cooperatively. Undergoes a major conformational rearrangment; in the free state forms homotetramers as a dimer of dimers. When bound to the CI domain of KaiC switches to a monomeric thioredoxin-fold (KaiB(fs)). KaiB(fs) binds CikA, leading it to dephosphorylate phospho-RpaA.

Its function is as follows. Key component of the KaiABC oscillator complex, which constitutes the main circadian regulator in cyanobacteria. Complex composition changes during the circadian cycle to control KaiC phosphorylation. KaiA stimulates KaiC autophosphorylation, while KaiB sequesters KaiA, leading to KaiC autodephosphorylation. Phospho-Ser-431 KaiC accumulation triggers binding of KaiB to form the KaiB(6):KaiC(6) complex, leading to changes in output regulators CikA and SasA. KaiB switches to a thioredoxin-like fold (KaiB(fs)) when bound to KaiC. KaiB(6):KaiC(6) formation exposes a site for KaiA binding that sequesters KaiA from KaiC, making the KaiC(6):KaiB(6):KaiA(12) complex that results in KaiC autodephosphorylation. In terms of biological role, a metamorphic protein which reversibly switches between an inactive tetrameric fold and a rare, thioredoxin-like monomeric fold (KaiB(fs)). KaiB(fs) binds phospho-KaiC, KaiA and CikA. KaiA and CikA compete for binding to KaiB(fs), and KaiB(fs) and SasA compete for binding to KaiC, thus the clock oscillator and output signal pathway are tightly coupled. The sequence is that of Circadian clock oscillator protein KaiB from Synechococcus sp. (strain RCC307).